The sequence spans 241 residues: NAD(P)H-hydrate epimerase (241 aa).

The region spanning 11–221 (AASLDKDLME…SIVEKYGLNC (211 aa)) is the YjeF N-terminal domain. 65-69 (NNGGD) lines the (6S)-NADPHX pocket. The K(+) site is built by N66 and D127. Residues 131–137 (GFSFGGP) and D160 each bind (6S)-NADPHX. S163 is a binding site for K(+).

The protein belongs to the NnrE/AIBP family. K(+) serves as cofactor.

The protein localises to the cytoplasm. Its subcellular location is the mitochondrion. It catalyses the reaction (6R)-NADHX = (6S)-NADHX. The enzyme catalyses (6R)-NADPHX = (6S)-NADPHX. Its function is as follows. Catalyzes the epimerization of the S- and R-forms of NAD(P)HX, a damaged form of NAD(P)H that is a result of enzymatic or heat-dependent hydration. This is a prerequisite for the S-specific NAD(P)H-hydrate dehydratase to allow the repair of both epimers of NAD(P)HX. The polypeptide is NAD(P)H-hydrate epimerase (Aspergillus fumigatus (strain ATCC MYA-4609 / CBS 101355 / FGSC A1100 / Af293) (Neosartorya fumigata)).